Consider the following 554-residue polypeptide: MFCIQCEQTIRTPAGNGCSYSQGMCGKLAATSDLQDLLIYMLQGVSVYAVKARELGIIDAEIDSFVPKAFFATLTNVNFDDERIMAYTQQAAHYRAQLKASYEAACEQAGIAVEQVPQVAQLVLGTSKIEMLAQAPIALLNKDKHDVHEDIMGLRLLCLYGLKGAAAYMEHARVLGQTDADVAGRFHEIMSFLGEPSVDGDKLFTTAMDIGQLNYRIMAMLDAGETQAFGHPEPTVVNTKPFKGKAILVSGHDMKDLELILEQTVGKGINVFTHGEMLPALAYPAFKKYPHLVGNYGSAWQNQQQEFANFPGAVVMTSNCIIDPNVGSYSDRIFTRSIVGWPGVVHIEGDDFSAVIDKALALEGFIYDEIPHTITIGFAHNALMAAAPAVVENVKSGAIKHFFLVGGCDGDKADRSYFTELAKSTPKDSIILTLGCGKYKFNKLEFGDINGIPRLLDVGQCNDAYSAIQLAIALAEVFECDINELPLSLVLSWFEQKAIVVLLTLLSLGVKNIRTGPTPPAFLTANLAKILEEKFGLRNTTTVEADLKTMLNVA.

The [2Fe-2S] cluster site is built by Cys-3, Cys-6, Cys-18, and Cys-25. Residues His-252, Glu-276, Cys-320, Cys-408, Cys-436, Cys-461, Glu-495, and Lys-497 each coordinate hybrid [4Fe-2O-2S] cluster. The residue at position 408 (Cys-408) is a Cysteine persulfide.

The protein belongs to the HCP family. [2Fe-2S] cluster is required as a cofactor. Requires hybrid [4Fe-2O-2S] cluster as cofactor.

The protein localises to the cytoplasm. The catalysed reaction is A + NH4(+) + H2O = hydroxylamine + AH2 + H(+). Functionally, catalyzes the reduction of hydroxylamine to form NH(3) and H(2)O. This Shewanella baltica (strain OS195) protein is Hydroxylamine reductase.